We begin with the raw amino-acid sequence, 257 residues long: Type III pantothenate kinase (257 aa).

Residue 6–13 (DCGNTNTV) participates in ATP binding. 107-110 (GPDR) contributes to the substrate binding site. The active-site Proton acceptor is D109. Position 129 (D129) interacts with K(+). T132 is a binding site for ATP. Residue T184 coordinates substrate.

The protein belongs to the type III pantothenate kinase family. In terms of assembly, homodimer. Requires NH4(+) as cofactor. K(+) is required as a cofactor.

It is found in the cytoplasm. The catalysed reaction is (R)-pantothenate + ATP = (R)-4'-phosphopantothenate + ADP + H(+). The protein operates within cofactor biosynthesis; coenzyme A biosynthesis; CoA from (R)-pantothenate: step 1/5. Its function is as follows. Catalyzes the phosphorylation of pantothenate (Pan), the first step in CoA biosynthesis. This Cereibacter sphaeroides (strain ATCC 17029 / ATH 2.4.9) (Rhodobacter sphaeroides) protein is Type III pantothenate kinase.